A 392-amino-acid polypeptide reads, in one-letter code: tRNA(Met) cytidine acetate ligase (392 aa).

ATP contacts are provided by residues 7–20, Gly-101, Asn-162, and 187–188; these read VVEY…HQLH and RI.

The protein belongs to the TmcAL family.

The protein resides in the cytoplasm. The catalysed reaction is cytidine(34) in elongator tRNA(Met) + acetate + ATP = N(4)-acetylcytidine(34) in elongator tRNA(Met) + AMP + diphosphate. In terms of biological role, catalyzes the formation of N(4)-acetylcytidine (ac(4)C) at the wobble position of elongator tRNA(Met), using acetate and ATP as substrates. First activates an acetate ion to form acetyladenylate (Ac-AMP) and then transfers the acetyl group to tRNA to form ac(4)C34. In Listeria welshimeri serovar 6b (strain ATCC 35897 / DSM 20650 / CCUG 15529 / CIP 8149 / NCTC 11857 / SLCC 5334 / V8), this protein is tRNA(Met) cytidine acetate ligase.